A 182-amino-acid polypeptide reads, in one-letter code: Large ribosomal subunit protein uL6 (182 aa).

This sequence belongs to the universal ribosomal protein uL6 family. As to quaternary structure, part of the 50S ribosomal subunit.

In terms of biological role, this protein binds to the 23S rRNA, and is important in its secondary structure. It is located near the subunit interface in the base of the L7/L12 stalk, and near the tRNA binding site of the peptidyltransferase center. In Caldicellulosiruptor bescii (strain ATCC BAA-1888 / DSM 6725 / KCTC 15123 / Z-1320) (Anaerocellum thermophilum), this protein is Large ribosomal subunit protein uL6.